We begin with the raw amino-acid sequence, 103 residues long: Histone H4.1 (103 aa).

The span at 1–14 (MSGRGKGGKGLGKG) shows a compositional bias: gly residues. The disordered stretch occupies residues 1–20 (MSGRGKGGKGLGKGGAKRHR). Residue lysine 6 is modified to N6-acetyl-N6-methyllysine; alternate. N6-methyllysine; alternate occurs at positions 6, 9, and 13. Lysine 13 carries the N6-acetyl-N6-methyllysine; alternate modification. A DNA-binding region spans residues 17–21 (KRHRK). The residue at position 92 (lysine 92) is an N6-glutaryllysine.

Belongs to the histone H4 family. In terms of assembly, the nucleosome is a histone octamer containing two molecules each of H2A, H2B, H3 and H4 assembled in one H3-H4 heterotetramer and two H2A-H2B heterodimers. The octamer wraps approximately 147 bp of DNA. Glutarylation at Lys-92 (H4K91glu) destabilizes nucleosomes by promoting dissociation of the H2A-H2B dimers from nucleosomes.

The protein resides in the nucleus. It is found in the chromosome. Functionally, core component of nucleosome. Nucleosomes wrap and compact DNA into chromatin, limiting DNA accessibility to the cellular machineries which require DNA as a template. Histones thereby play a central role in transcription regulation, DNA repair, DNA replication and chromosomal stability. DNA accessibility is regulated via a complex set of post-translational modifications of histones, also called histone code, and nucleosome remodeling. The sequence is that of Histone H4.1 (HHF1) from Eremothecium gossypii (strain ATCC 10895 / CBS 109.51 / FGSC 9923 / NRRL Y-1056) (Yeast).